The following is a 437-amino-acid chain: MASLGPSPWAPLSTPAPTAQLLLFLLLQVSAQPQGLSGMQGEPSLGDSSSGEDELGVDVLPSEEDAPEEADPPDGEDPPEVNSEDRMEESLGLEDLSTPEAPEHSQGSHGDEKGGGHSHWSYGGTLLWPQVSPACAGRFQSPVDIRLERTAFCRTLQPLELLGYELQPLPELSLSNNGHTVQLTLPPGLKMALGPGQEYRALQLHLHWGTSDHPGSEHTVNGHRFPAEIHVVHLSTAFSELHEALGRPGGLAVLAAFLQESPEENSAYEQLLSHLEEISEEGSKIEIPGLDVSALLPSDLSRYYRYEGSLTTPPCSQGVIWTVFNETVKLSAKQLHTLSVSLWGPRDSRLQLNFRATQPLNGRTIEASFPAAEDSSPEPVHVNSCFTAGDILALVFGLLFAVTSIAFLLQLRRQHRHRSGTKDRVSYSPAEMTETGA.

The N-terminal stretch at 1 to 31 (MASLGPSPWAPLSTPAPTAQLLLFLLLQVSA) is a signal peptide. Residues 32-95 (QPQGLSGMQG…RMEESLGLED (64 aa)) are proteoglycan-like (PG). Residues 32 to 390 (QPQGLSGMQG…HVNSCFTAGD (359 aa)) are Extracellular-facing. The segment at 34–118 (QGLSGMQGEP…HGDEKGGGHS (85 aa)) is disordered. Over residues 50 to 79 (SGEDELGVDVLPSEEDAPEEADPPDGEDPP) the composition is skewed to acidic residues. The catalytic stretch occupies residues 96–390 (LSTPEAPEHS…HVNSCFTAGD (295 aa)). O-linked (GlcNAc...) threonine glycosylation is present at Thr-98. The 252-residue stretch at 118 to 369 (SHWSYGGTLL…LNGRTIEASF (252 aa)) folds into the Alpha-carbonic anhydrase domain. A disulfide bridge links Cys-135 with Cys-315. Catalysis depends on His-179, which acts as the Proton donor/acceptor. 3 residues coordinate Zn(2+): His-205, His-207, and His-230. 311–312 (TT) contributes to the substrate binding site. The N-linked (GlcNAc...) asparagine glycan is linked to Asn-325. A helical transmembrane segment spans residues 391 to 411 (ILALVFGLLFAVTSIAFLLQL). Residues 412 to 437 (RRQHRHRSGTKDRVSYSPAEMTETGA) lie on the Cytoplasmic side of the membrane. A Phosphotyrosine modification is found at Tyr-427.

Belongs to the alpha-carbonic anhydrase family. Forms oligomers linked by disulfide bonds. It depends on Zn(2+) as a cofactor. Post-translationally, asn-325 bears high-mannose type glycan structures.

The protein resides in the nucleus. The protein localises to the nucleolus. It is found in the cell membrane. Its subcellular location is the cell projection. It localises to the microvillus membrane. The catalysed reaction is hydrogencarbonate + H(+) = CO2 + H2O. With respect to regulation, inhibited by acetazolamide. In terms of biological role, catalyzes the interconversion between carbon dioxide and water and the dissociated ions of carbonic acid (i.e. bicarbonate and hydrogen ions). This Mus musculus (Mouse) protein is Carbonic anhydrase 9 (Ca9).